A 454-amino-acid polypeptide reads, in one-letter code: Maintenance of mitochondrial morphology protein 1 (454 aa).

Topologically, residues 1 to 117 are lumenal; sequence MESNYTGMDG…SFSSWSFAQG (117 aa). A helical transmembrane segment spans residues 118-138; the sequence is LIVGQVSVVLVLIFFIKFFIF. Residues 139-454 are Cytoplasmic-facing; it reads SDSSTKTNPN…ESEPGRETHY (316 aa). Residues 144–164 form a disordered region; the sequence is KTNPNPAKNSSSTNSLSGLSS. Positions 153 to 164 are enriched in low complexity; it reads SSSTNSLSGLSS. An SMP-LTD domain is found at 215–427; it reads PAESLDWFNV…EPRFQFIKLP (213 aa). The a 1,2-diacyl-sn-glycero-3-phosphate site is built by R253, W411, R415, W430, R432, and S433. The segment at 434 to 454 is disordered; that stretch reads KNTREGKADVDESEPGRETHY. The segment covering 435-454 has biased composition (basic and acidic residues); the sequence is NTREGKADVDESEPGRETHY.

It belongs to the MMM1 family. Homodimer. Component of the ER-mitochondria encounter structure (ERMES) or MDM complex, composed of MMM1, MDM10, MDM12 and MDM34. An MMM1 homodimer associates with one molecule of MDM12 on each side in a pairwise head-to-tail manner, and the SMP-LTD domains of MMM1 and MDM12 generate a continuous hydrophobic tunnel for phospholipid trafficking.

The protein localises to the endoplasmic reticulum membrane. Its function is as follows. Component of the ERMES/MDM complex, which serves as a molecular tether to connect the endoplasmic reticulum (ER) and mitochondria. Components of this complex are involved in the control of mitochondrial shape and protein biogenesis, and function in nonvesicular lipid trafficking between the ER and mitochondria. Preferentially binds to glycerophospholipids such as phosphatidylcholoine (PC), phosphatidic acid (PA), phosphatidylglycerol (PG), and phosphatidylserine (PS), but not to phosphatidylethanolamine (PE). The MDM12-MMM1 subcomplex functions in the major beta-barrel assembly pathway that is responsible for biogenesis of all outer membrane beta-barrel proteins, and acts in a late step after the SAM complex. The MDM10-MDM12-MMM1 subcomplex further acts in the TOM40-specific pathway after the action of the MDM12-MMM1 complex. Essential for establishing and maintaining the structure of mitochondria and maintenance of mtDNA nucleoids. This chain is Maintenance of mitochondrial morphology protein 1, found in Zygosaccharomyces rouxii (strain ATCC 2623 / CBS 732 / NBRC 1130 / NCYC 568 / NRRL Y-229).